The chain runs to 199 residues: Interleukin-11 (199 aa).

Residues 1–21 form the signal peptide; sequence MNCVCRLVLVVLSLWPDTAVA. An important for interaction with IL11RA and for the stimulation of cell proliferation region spans residues 182 to 190; the sequence is HLTLDWAVR.

Belongs to the IL-6 superfamily. In terms of assembly, interacts with IL11RA to associate with IL6ST, giving rise to a multimeric signaling complex.

It localises to the secreted. Functionally, cytokine that stimulates the proliferation of hematopoietic stem cells and megakaryocyte progenitor cells and induces megakaryocyte maturation resulting in increased platelet production. Also promotes the proliferation of hepatocytes in response to liver damage. Binding to its receptor formed by IL6ST and IL11RA activates a signaling cascade that promotes cell proliferation. Signaling leads to the activation of intracellular protein kinases and the phosphorylation of STAT3. The interaction with the membrane-bound IL11RA and IL6ST stimulates 'classic signaling', whereas the binding of IL11 and soluble IL11RA to IL6ST stimulates 'trans-signaling'. This chain is Interleukin-11, found in Homo sapiens (Human).